A 214-amino-acid chain; its full sequence is Cytochrome b (214 aa).

4 helical membrane passes run 31–51 (FGSMLLICLMIQTTTGFFLAI), 75–96 (WIMQNTHAIGASLFFICIYTHI), 111–131 (WLSGTTLLIILMATAFFGYVL), and 176–196 (FFALHFILPFAIISLSSIHIL). 2 residues coordinate heme b: His81 and His95. Residues His180 and His194 each coordinate heme b. Residue His199 participates in a ubiquinone binding.

Belongs to the cytochrome b family. As to quaternary structure, the cytochrome bc1 complex contains 3 respiratory subunits (MT-CYB, CYC1 and UQCRFS1), 2 core proteins (UQCRC1 and UQCRC2) and probably 6 low-molecular weight proteins. Heme b serves as cofactor.

Its subcellular location is the mitochondrion inner membrane. Functionally, component of the ubiquinol-cytochrome c reductase complex (complex III or cytochrome b-c1 complex) that is part of the mitochondrial respiratory chain. The b-c1 complex mediates electron transfer from ubiquinol to cytochrome c. Contributes to the generation of a proton gradient across the mitochondrial membrane that is then used for ATP synthesis. The sequence is that of Cytochrome b (MT-CYB) from Lachesis muta muta (Bushmaster).